Reading from the N-terminus, the 205-residue chain is Retron Vc95 putative HNH endonuclease (205 aa).

Putative HNH endonuclease component of antiviral defense system retron Vc95, composed of a non-coding RNA (ncRNA), a reverse transcriptase (RT), a probable ATP-binding protein and this protein. Expression of retron Vc95 confers protection against bacteriophages T2, T4 and T6. At multiplicity of infection (MOI) of 0.02 cultures slow growth when infected with T4 but do not collapse, at MOI 2 cultures enter growth stasis. This is Retron Vc95 putative HNH endonuclease from Vibrio cholerae serotype O1 biovar El Tor.